The following is a 740-amino-acid chain: E3 ubiquitin-protein ligase WAV3 (740 aa).

The segment at 14-105 (PRNSDAAAPD…AISNPSSPRS (92 aa)) is disordered. Low complexity predominate over residues 49-67 (SGGSNPSTPRSTSSPSLRC). Residues 71 to 90 (DAQTPTAEQTSTPRSATKSP) show a composition bias toward polar residues. Residues 122–167 (CGICLNSVKTGQGTAKYTAECSHAFHFPCIADYVRKQGKLVCPVCN) form an RING-type; atypical zinc finger. Residues 332 to 476 (DLVVVVDVGG…IPVTEHGFGE (145 aa)) form the VWFA domain. The tract at residues 677-709 (QSQHQQQHNQRRRGSERETTTTMTLMDENGEPL) is disordered.

Interacts with SINAT1, SINAT2, SINAT3, SINAT4, SINAT5, TOR1/SPR2 and FIP2. Expressed in root tips and leaf primordia.

It carries out the reaction S-ubiquitinyl-[E2 ubiquitin-conjugating enzyme]-L-cysteine + [acceptor protein]-L-lysine = [E2 ubiquitin-conjugating enzyme]-L-cysteine + N(6)-ubiquitinyl-[acceptor protein]-L-lysine.. E3 ubiquitin-protein ligase involved in the regulation of root growth. Acts as a positive regulator of root gravitropism. Possesses E3 protein ligase activity in vitro. This Arabidopsis thaliana (Mouse-ear cress) protein is E3 ubiquitin-protein ligase WAV3.